We begin with the raw amino-acid sequence, 445 residues long: Cryptochrome DASH (445 aa).

In terms of domain architecture, Photolyase/cryptochrome alpha/beta spans 4-137 (KIGLYWFTFD…VIVQHSVRSL (134 aa)).

Belongs to the DNA photolyase class-1 family. FAD serves as cofactor. It depends on (6R)-5,10-methylene-5,6,7,8-tetrahydrofolate as a cofactor.

May have a photoreceptor function. Binds DNA; probably functions as a transcriptional repressor. This is Cryptochrome DASH (cry) from Vibrio parahaemolyticus serotype O3:K6 (strain RIMD 2210633).